Here is a 217-residue protein sequence, read N- to C-terminus: Probable GTP-binding protein EngB (217 aa).

In terms of domain architecture, EngB-type G spans 29–213; it reads GPLEVAFAGR…RQAIGETVGV (185 aa). Residues 37–44, 64–68, 91–94, 158–161, and 192–194 each bind GTP; these read GRSNVGKS, GRTQE, DMPG, TKTD, and TSS. Positions 44 and 66 each coordinate Mg(2+).

It belongs to the TRAFAC class TrmE-Era-EngA-EngB-Septin-like GTPase superfamily. EngB GTPase family. It depends on Mg(2+) as a cofactor.

Necessary for normal cell division and for the maintenance of normal septation. The sequence is that of Probable GTP-binding protein EngB from Rhizobium leguminosarum bv. trifolii (strain WSM2304).